The chain runs to 420 residues: D-tagatose-1,6-bisphosphate aldolase subunit GatZ (420 aa).

Belongs to the GatZ/KbaZ family. GatZ subfamily. Forms a complex with GatY.

It functions in the pathway carbohydrate metabolism; D-tagatose 6-phosphate degradation; D-glyceraldehyde 3-phosphate and glycerone phosphate from D-tagatose 6-phosphate: step 2/2. Functionally, component of the tagatose-1,6-bisphosphate aldolase GatYZ that is required for full activity and stability of the Y subunit. Could have a chaperone-like function for the proper and stable folding of GatY. When expressed alone, GatZ does not show any aldolase activity. Is involved in the catabolism of galactitol. This is D-tagatose-1,6-bisphosphate aldolase subunit GatZ from Escherichia coli O9:H4 (strain HS).